The chain runs to 204 residues: LexA repressor (204 aa).

The segment at residues arginine 29–arginine 49 is a DNA-binding region (H-T-H motif). Catalysis depends on for autocatalytic cleavage activity residues serine 123 and lysine 160.

Belongs to the peptidase S24 family. Homodimer.

It carries out the reaction Hydrolysis of Ala-|-Gly bond in repressor LexA.. Its function is as follows. Represses a number of genes involved in the response to DNA damage (SOS response), including recA and lexA. In the presence of single-stranded DNA, RecA interacts with LexA causing an autocatalytic cleavage which disrupts the DNA-binding part of LexA, leading to derepression of the SOS regulon and eventually DNA repair. The protein is LexA repressor of Alcanivorax borkumensis (strain ATCC 700651 / DSM 11573 / NCIMB 13689 / SK2).